Here is a 501-residue protein sequence, read N- to C-terminus: Symplectin (501 aa).

The CN hydrolase domain maps to P20–P287. Catalysis depends on E60, which acts as the Proton acceptor. K163 acts as the Proton donor in catalysis. C196 functions as the Nucleophile in the catalytic mechanism. S-(coelenterazin-3a-yl)cysteine is present on C390.

Belongs to the carbon-nitrogen hydrolase superfamily. BTD/VNN family. As to expression, photogenic gland (at protein level).

Its function is as follows. Monovalent ion-dependent bioluminescence photoprotein. Displays an emission peak at 470 nm (blue light). Trace amounts of monovalent ion trigger the intramolecular oxidation of the chromophore, didehydrocoelenterazine, with the emission of light. The polypeptide is Symplectin (Sthenoteuthis oualaniensis (Purpleback flying squid)).